The following is a 333-amino-acid chain: Nucleoid-associated protein PSPTO_1265 (333 aa).

The protein belongs to the YejK family.

It is found in the cytoplasm. Its subcellular location is the nucleoid. In Pseudomonas syringae pv. tomato (strain ATCC BAA-871 / DC3000), this protein is Nucleoid-associated protein PSPTO_1265.